Consider the following 210-residue polypeptide: MARRSQGTKLHLAVLCLVVSCHAIGLSDLMERASQRSDKLHSLSTSLTKDLDSHFPPMGRVMMPRPSMCHTSSLQTPKDKEQALRVSENELISLARSLLLAWNDPLLLLSSEAPTLPHPSNGDISSKIRELQDYSKSLGDGLDILVNKMGPSSQYISSIPFKGGDLGNDKTSRLINFHFLMSCFRRDSHKIDSFLKVLRCRATKMRPETC.

The signal sequence occupies residues 1–23; sequence MARRSQGTKLHLAVLCLVVSCHA. 2 disulfides stabilise this stretch: Cys69–Cys183 and Cys200–Cys210.

Belongs to the somatotropin/prolactin family. As to expression, pituitary gland.

It localises to the secreted. This is Prolactin (prl) from Coregonus autumnalis (Arctic cisco).